A 397-amino-acid chain; its full sequence is Ribosomal RNA large subunit methyltransferase I (397 aa).

The PUA domain maps to 2–79 (TAAIYLVKGR…KEEINKAFFV (78 aa)).

The protein belongs to the methyltransferase superfamily. RlmI family.

It is found in the cytoplasm. It catalyses the reaction cytidine(1962) in 23S rRNA + S-adenosyl-L-methionine = 5-methylcytidine(1962) in 23S rRNA + S-adenosyl-L-homocysteine + H(+). Its function is as follows. Specifically methylates the cytosine at position 1962 (m5C1962) of 23S rRNA. This chain is Ribosomal RNA large subunit methyltransferase I, found in Vibrio campbellii (strain ATCC BAA-1116).